We begin with the raw amino-acid sequence, 411 residues long: Dual-specificity RNA methyltransferase RlmN (411 aa).

The active-site Proton acceptor is Glu-125. A Radical SAM core domain is found at 131-380 (EEGRGTLCIS…IRTPRGRDIL (250 aa)). The cysteines at positions 138 and 383 are disulfide-linked. [4Fe-4S] cluster-binding residues include Cys-145, Cys-149, and Cys-152. S-adenosyl-L-methionine-binding positions include 209 to 210 (GE), Ser-241, 263 to 265 (SLH), and Asn-340. The active-site S-methylcysteine intermediate is Cys-383.

It belongs to the radical SAM superfamily. RlmN family. It depends on [4Fe-4S] cluster as a cofactor.

It localises to the cytoplasm. The enzyme catalyses adenosine(2503) in 23S rRNA + 2 reduced [2Fe-2S]-[ferredoxin] + 2 S-adenosyl-L-methionine = 2-methyladenosine(2503) in 23S rRNA + 5'-deoxyadenosine + L-methionine + 2 oxidized [2Fe-2S]-[ferredoxin] + S-adenosyl-L-homocysteine. It carries out the reaction adenosine(37) in tRNA + 2 reduced [2Fe-2S]-[ferredoxin] + 2 S-adenosyl-L-methionine = 2-methyladenosine(37) in tRNA + 5'-deoxyadenosine + L-methionine + 2 oxidized [2Fe-2S]-[ferredoxin] + S-adenosyl-L-homocysteine. Its function is as follows. Specifically methylates position 2 of adenine 2503 in 23S rRNA and position 2 of adenine 37 in tRNAs. m2A2503 modification seems to play a crucial role in the proofreading step occurring at the peptidyl transferase center and thus would serve to optimize ribosomal fidelity. This is Dual-specificity RNA methyltransferase RlmN from Brucella canis (strain ATCC 23365 / NCTC 10854 / RM-666).